The sequence spans 373 residues: Queuine tRNA-ribosyltransferase (373 aa).

Residue Asp90 is the Proton acceptor of the active site. Residues 90-94, Asp144, Gln193, and Gly220 each bind substrate; that span reads DSGGF. The segment at 251–257 is RNA binding; the sequence is GVGTPED. Catalysis depends on Asp270, which acts as the Nucleophile. The RNA binding; important for wobble base 34 recognition stretch occupies residues 275 to 279; that stretch reads TRNAR. Zn(2+)-binding residues include Cys308, Cys310, Cys313, and His339.

This sequence belongs to the queuine tRNA-ribosyltransferase family. Homodimer. Within each dimer, one monomer is responsible for RNA recognition and catalysis, while the other monomer binds to the replacement base PreQ1. The cofactor is Zn(2+).

It catalyses the reaction 7-aminomethyl-7-carbaguanine + guanosine(34) in tRNA = 7-aminomethyl-7-carbaguanosine(34) in tRNA + guanine. It functions in the pathway tRNA modification; tRNA-queuosine biosynthesis. Catalyzes the base-exchange of a guanine (G) residue with the queuine precursor 7-aminomethyl-7-deazaguanine (PreQ1) at position 34 (anticodon wobble position) in tRNAs with GU(N) anticodons (tRNA-Asp, -Asn, -His and -Tyr). Catalysis occurs through a double-displacement mechanism. The nucleophile active site attacks the C1' of nucleotide 34 to detach the guanine base from the RNA, forming a covalent enzyme-RNA intermediate. The proton acceptor active site deprotonates the incoming PreQ1, allowing a nucleophilic attack on the C1' of the ribose to form the product. After dissociation, two additional enzymatic reactions on the tRNA convert PreQ1 to queuine (Q), resulting in the hypermodified nucleoside queuosine (7-(((4,5-cis-dihydroxy-2-cyclopenten-1-yl)amino)methyl)-7-deazaguanosine). This chain is Queuine tRNA-ribosyltransferase, found in Campylobacter jejuni (strain RM1221).